Reading from the N-terminus, the 207-residue chain is LexA repressor (207 aa).

Residues 28 to 48 constitute a DNA-binding region (H-T-H motif); sequence VREIGEAVGLASSFTVHGHLS. Residues Ser-130 and Lys-168 each act as for autocatalytic cleavage activity in the active site.

The protein belongs to the peptidase S24 family. In terms of assembly, homodimer.

The catalysed reaction is Hydrolysis of Ala-|-Gly bond in repressor LexA.. Represses a number of genes involved in the response to DNA damage (SOS response), including recA and lexA. In the presence of single-stranded DNA, RecA interacts with LexA causing an autocatalytic cleavage which disrupts the DNA-binding part of LexA, leading to derepression of the SOS regulon and eventually DNA repair. This chain is LexA repressor, found in Staphylococcus aureus (strain Newman).